The primary structure comprises 854 residues: V-type proton ATPase 116 kDa subunit a 2 (854 aa).

Residues 1–393 (MGSLFRSETM…DAYGVGSYQE (393 aa)) are Cytoplasmic-facing. A helical transmembrane segment spans residues 394-412 (VNPALFTIITFPFLFAVMF). The Vacuolar segment spans residues 413–414 (GD). Residues 415 to 431 (FGHGFVMFLFALLLVLN) traverse the membrane as a helical segment. The Cytoplasmic portion of the chain corresponds to 432–445 (ENHPRLNQSQEIMR). Residues 446-475 (MFFNGRYILLLMGLFSVYTGLIYNDCFSKS) form a helical membrane-spanning segment. The Vacuolar portion of the chain corresponds to 476–549 (VNLFGSRWNV…ATNRLTFLNS (74 aa)). Residues 550-569 (FKMKMSVILGITHMTFGVIL) form a helical membrane-spanning segment. The Cytoplasmic segment spans residues 570–587 (GIFNHLHFRKKFNICLVS). A helical membrane pass occupies residues 588–608 (IPELLFMLCIFGYLIFMIIYK). Residues 609-651 (WLVYSAETSRTAPSILIEFISMFLFLASDTGGLYPGQEHVQRL) are Vacuolar-facing. The chain crosses the membrane as a helical span at residues 652-671 (LLLITVLSVPVLFLGKPLFL). At 672–739 (LWLHRGRSCF…EILMTQIIHS (68 aa)) the chain is on the cytoplasmic side. Residues Ser-695 and Ser-700 each carry the phosphoserine modification. The helical transmembrane segment at 740 to 764 (IEYCLGCISNTASYLRLWALSLAHA) threads the bilayer. The Vacuolar portion of the chain corresponds to 765-785 (QLSEVLWAMLMHVGLRVDTAY). Residues 786–824 (GVLVLLPVIAFFAVLTIFILLIMEGLSAFLHAIRLHWVE) form a helical membrane-spanning segment. Topologically, residues 825-854 (FQNKFYVGAGTKFVPFSFRLLSSKFSDDLA) are cytoplasmic.

Belongs to the V-ATPase 116 kDa subunit family. In terms of assembly, V-ATPase is a heteromultimeric enzyme made up of two complexes: the ATP-hydrolytic V1 complex and the proton translocation V0 complex. The V1 complex consists of three catalytic AB heterodimers that form a heterohexamer, three peripheral stalks each consisting of EG heterodimers, one central rotor including subunits D and F, and the regulatory subunits C and H. The proton translocation complex V0 consists of the proton transport subunit a, a ring of proteolipid subunits c9c'', rotary subunit d, subunits e and f, and the accessory subunits ATP6AP1/Ac45 and ATP6AP2/PRR. Directly interacts with PSCD2 through its N-terminal cytosolic tail in an intra-endosomal acidification-dependent manner. Disruption of this interaction results in the inhibition of endocytosis. Interacts with SPAAR. Highly expressed in lung, kidney and spleen.

It localises to the cell membrane. The protein localises to the endosome membrane. Its function is as follows. Subunit of the V0 complex of vacuolar(H+)-ATPase (V-ATPase), a multisubunit enzyme composed of a peripheral complex (V1) that hydrolyzes ATP and a membrane integral complex (V0) that translocates protons. V-ATPase is responsible for acidifying and maintaining the pH of intracellular compartments and in some cell types, is targeted to the plasma membrane, where it is responsible for acidifying the extracellular environment. Essential component of the endosomal pH-sensing machinery. May play a role in maintaining the Golgi functions, such as glycosylation maturation, by controlling the Golgi pH. In aerobic conditions, involved in intracellular iron homeostasis, thus triggering the activity of Fe(2+) prolyl hydroxylase (PHD) enzymes, and leading to HIF1A hydroxylation and subsequent proteasomal degradation. The polypeptide is V-type proton ATPase 116 kDa subunit a 2 (ATP6V0A2) (Bos taurus (Bovine)).